A 385-amino-acid polypeptide reads, in one-letter code: Probable thioesterase PNKD (385 aa).

Residues 32 to 42 (KASQNRTRALQ) show a composition bias toward polar residues. The tract at residues 32-56 (KASQNRTRALQSHSSPECKEEPEPL) is disordered. Position 121 is a phosphoserine (Val121). His172, His174, Asp176, His177, His229, Asp253, and His291 together coordinate Zn(2+).

This sequence belongs to the metallo-beta-lactamase superfamily. Glyoxalase II family. As to quaternary structure, isoform 2 interacts with the sarcomeric proteins, MRLC2, MYOM1 and ENO3. The cofactor is Zn(2+). Post-translationally, undergoes cleavage at the N-terminus. Expressed in many discrete areas of the brain.

It localises to the cell membrane. The protein resides in the mitochondrion. The protein localises to the cytoplasm. The enzyme catalyses a thioester + H2O = a thiol + a carboxylate + H(+). Probable thioesterase that may play a role in cellular detoxification processes; it likely acts on a yet-unknown alpha-hydroxythioester substrate. In vitro, it is able to catalyze the hydrolysis of S-D-lactoyl-glutathione to form glutathione and D-lactic acid at very low rate, though this reaction is not physiologically relevant in vivo. In Mus musculus (Mouse), this protein is Probable thioesterase PNKD (Pnkd).